Reading from the N-terminus, the 479-residue chain is ATP-dependent RNA helicase DbpA (479 aa).

The Q motif motif lies at 2 to 30; it reads SHFKNYQISHDILRALEGLGYTEPTKVQQ. The region spanning 33 to 203 is the Helicase ATP-binding domain; sequence IPAALERKDL…RQYMQNPEHI (171 aa). Residue 46–53 coordinates ATP; that stretch reads SQTGSGKT. The DEAD box motif lies at 151-154; that stretch reads DEAD. One can recognise a Helicase C-terminal domain in the interval 214 to 374; the sequence is NIEHAVIQVR…KIEAPSQEEV (161 aa). Residues 404 to 479 are involved in 23S rRNA binding; sequence MKLYFNGGKK…KQLKVNKANK (76 aa).

Belongs to the DEAD box helicase family. DbpA subfamily. As to quaternary structure, may interact with RNA helicases CshA and CshB.

The protein resides in the cytoplasm. The enzyme catalyses ATP + H2O = ADP + phosphate + H(+). Its activity is regulated as follows. ATPase activity is stimulated by interaction with RNA. DEAD-box RNA helicase involved in the assembly of the 50S ribosomal subunit. Has an RNA-dependent ATPase activity, which is specific for 23S rRNA, and a 3' to 5' RNA helicase activity that uses the energy of ATP hydrolysis to destabilize and unwind short rRNA duplexes. The sequence is that of ATP-dependent RNA helicase DbpA from Bacillus subtilis (strain 168).